Consider the following 306-residue polypeptide: Ornithine carbamoyltransferase (306 aa).

Carbamoyl phosphate contacts are provided by residues 53 to 56, Gln80, Arg104, and 131 to 134; these read STRT and HPCQ. L-ornithine is bound by residues Asn162, Asp220, and 224–225; that span reads SM. Residues 260 to 261 and Arg288 contribute to the carbamoyl phosphate site; that span reads CL.

This sequence belongs to the aspartate/ornithine carbamoyltransferase superfamily. OTCase family.

The protein localises to the cytoplasm. It carries out the reaction carbamoyl phosphate + L-ornithine = L-citrulline + phosphate + H(+). The protein operates within amino-acid biosynthesis; L-arginine biosynthesis; L-arginine from L-ornithine and carbamoyl phosphate: step 1/3. In terms of biological role, reversibly catalyzes the transfer of the carbamoyl group from carbamoyl phosphate (CP) to the N(epsilon) atom of ornithine (ORN) to produce L-citrulline. This is Ornithine carbamoyltransferase from Methylobacillus flagellatus (strain ATCC 51484 / DSM 6875 / VKM B-1610 / KT).